Reading from the N-terminus, the 477-residue chain is UTP--glucose-1-phosphate uridylyltransferase (477 aa).

Alanine 2 is subject to N-acetylalanine. UTP-binding positions include 92–95 (LNGG), lysine 106, glutamine 169, and glycine 198. Substrate is bound at residue 94-95 (GG). Substrate contacts are provided by residues histidine 199 and 227-229 (NSD). Aspartate 229 and lysine 367 together coordinate UTP.

This sequence belongs to the UDPGP type 1 family. As to quaternary structure, monomer. Requires Mg(2+) as cofactor.

It is found in the cytoplasm. It carries out the reaction alpha-D-glucose 1-phosphate + UTP + H(+) = UDP-alpha-D-glucose + diphosphate. Inhibition by uncomplexed, free UTP. Functionally, plays a central role as a glucosyl donor in cellular metabolic pathways. This chain is UTP--glucose-1-phosphate uridylyltransferase, found in Solanum tuberosum (Potato).